A 170-amino-acid polypeptide reads, in one-letter code: Translationally-controlled tumor protein homolog (170 aa).

The TCTP domain occupies 1–170; it reads MIIYKCIISG…FKDGLLAEKC (170 aa).

It belongs to the TCTP family.

It localises to the cytoplasm. Functionally, involved in calcium binding and microtubule stabilization. The chain is Translationally-controlled tumor protein homolog (tpt1) from Lateolabrax japonicus (Japanese sea perch).